Consider the following 318-residue polypeptide: Ubiquitin-conjugating enzyme E2 J1 (318 aa).

The Cytoplasmic portion of the chain corresponds to 1-282; that stretch reads METRYNLKSP…QGQPPRAHHT (282 aa). A UBC core domain is found at 10–168; the sequence is PAVKRLMKEA…VLLPLKSGSG (159 aa). Cysteine 91 serves as the catalytic Glycyl thioester intermediate. The residue at position 184 (serine 184) is a Phosphoserine. A compositionally biased stretch (polar residues) spans 215–233; sequence PTTFQGATASTSYGAQNPS. The segment at 215-283 is disordered; the sequence is PTTFQGATAS…GQPPRAHHTE (69 aa). Positions 249 to 269 are enriched in low complexity; it reads SMSPRQRRAQQQSQRRPSTSP. Serine 266 and serine 268 each carry phosphoserine. The helical; Anchor for type IV membrane protein transmembrane segment at 283–303 threads the bilayer; it reads EHGGSAMLIIILTLALAALIF. Residues 304-318 lie on the Lumenal side of the membrane; it reads RRIYLANEYIFDFEL.

This sequence belongs to the ubiquitin-conjugating enzyme family. In terms of assembly, component of the HRD1 complex, which comprises at least SYNV1/HRD1, DERL1/2, FAM8A1, HERPUD1/HERP, OS9, SEL1L and UBE2J1. Interacts with E3 ligase RNF26. Interacts with E3 ligase RNF133. Phosphorylated at Ser-184 in a cytosolic stress-dependent manner by MAP kinase p38 MAPKAPK2. In terms of processing, phosphorylated UBE2J1 is rapidly ubiquitinated and subsequently degraded by the proteasome.

Its subcellular location is the endoplasmic reticulum membrane. It carries out the reaction S-ubiquitinyl-[E1 ubiquitin-activating enzyme]-L-cysteine + [E2 ubiquitin-conjugating enzyme]-L-cysteine = [E1 ubiquitin-activating enzyme]-L-cysteine + S-ubiquitinyl-[E2 ubiquitin-conjugating enzyme]-L-cysteine.. The protein operates within protein modification; protein ubiquitination. Functionally, catalyzes the covalent attachment of ubiquitin to other proteins. Functions in the selective degradation of misfolded membrane proteins from the endoplasmic reticulum (ERAD) and is essential for cells to recover from ER stress. Plays a role in MAPKAPK2-dependent translational control of TNF-alpha synthesis. Also acts as a platform for perinuclear positioning of the endosomal system by mediating ubiquitination of SQSTM1 through interaction with the E3 ubiquitin-protein ligase RNF26. Plays a role in male fecundity through the interaction with the E3 ubiquitin-protein ligase RNF133. The polypeptide is Ubiquitin-conjugating enzyme E2 J1 (Ube2j1) (Mus musculus (Mouse)).